A 326-amino-acid chain; its full sequence is Beta-ketoacyl-[acyl-carrier-protein] synthase III (326 aa).

Residues Cys-116 and His-253 contribute to the active site. An ACP-binding region spans residues 254-258 (QANIR). The active site involves Asn-283.

This sequence belongs to the thiolase-like superfamily. FabH family. Homodimer.

It is found in the cytoplasm. The enzyme catalyses malonyl-[ACP] + acetyl-CoA + H(+) = 3-oxobutanoyl-[ACP] + CO2 + CoA. It functions in the pathway lipid metabolism; fatty acid biosynthesis. Catalyzes the condensation reaction of fatty acid synthesis by the addition to an acyl acceptor of two carbons from malonyl-ACP. Catalyzes the first condensation reaction which initiates fatty acid synthesis and may therefore play a role in governing the total rate of fatty acid production. Possesses both acetoacetyl-ACP synthase and acetyl transacylase activities. Its substrate specificity determines the biosynthesis of branched-chain and/or straight-chain of fatty acids. The chain is Beta-ketoacyl-[acyl-carrier-protein] synthase III from Jannaschia sp. (strain CCS1).